The chain runs to 343 residues: Protein SOSEKI 4 (343 aa).

The segment at 18 to 109 (RIVPVVYYLS…YVLKGSQILD (92 aa)) is DIX-like oligomerization domain. Positions 148–194 (RKLSMDASTQTDDRRRRKSPVDEVNEVTELSREEITSPPQSDSSPET) are disordered. Positions 184–194 (SPPQSDSSPET) are enriched in polar residues. Residues 233–234 (CG) carry the Association to cell membranes motif.

This sequence belongs to the SOSEKI family. Homodimer. Forms long polymer filaments with other SOKs proteins polymers (e.g. SOK1, SOK2, SOK3 and SOK4) crucial for polar localization and biological activity. Binds to ANGUSTIFOLIA (AN). In terms of tissue distribution, expressed during embryogenesis and in roots.

The protein resides in the cell membrane. Functionally, SOSEKI proteins (SOK1-5) locally interpret global polarity cues and can influence cell division orientation to coordinate cell polarization relative to body axes, probably by guiding ANGUSTIFOLIA (AN) polarized localization. Positive regulator of auxin (indole-3-acetic acid, IAA) biosynthesis and signaling pathway leading to the modulation of seedling growth, plant and inflorescence development. Negative regulator of stress responses (e.g. salinity and osmotic stress). The chain is Protein SOSEKI 4 from Arabidopsis thaliana (Mouse-ear cress).